The sequence spans 327 residues: Tagatose 1,6-diphosphate aldolase 2 (327 aa).

This sequence belongs to the aldolase LacD family.

The catalysed reaction is D-tagatofuranose 1,6-bisphosphate = D-glyceraldehyde 3-phosphate + dihydroxyacetone phosphate. It functions in the pathway carbohydrate metabolism; D-tagatose 6-phosphate degradation; D-glyceraldehyde 3-phosphate and glycerone phosphate from D-tagatose 6-phosphate: step 2/2. The chain is Tagatose 1,6-diphosphate aldolase 2 (lacD2) from Streptococcus pyogenes serotype M1.